Reading from the N-terminus, the 310-residue chain is Protoheme IX farnesyltransferase (310 aa).

The next 9 membrane-spanning stretches (helical) occupy residues 30-47 (VTTL…FGAA), 50-70 (GLPL…LVSG), 102-122 (LGHG…YLGL), 126-146 (WLTA…YTPL), 152-172 (ICTT…WTAI), 181-201 (VALF…IAWL), 228-248 (IVIY…LRFA), 251-271 (IYFL…LRMF), and 286-306 (ARQL…VMML).

It belongs to the UbiA prenyltransferase family. Protoheme IX farnesyltransferase subfamily.

Its subcellular location is the cell inner membrane. The enzyme catalyses heme b + (2E,6E)-farnesyl diphosphate + H2O = Fe(II)-heme o + diphosphate. The protein operates within porphyrin-containing compound metabolism; heme O biosynthesis; heme O from protoheme: step 1/1. In terms of biological role, converts heme B (protoheme IX) to heme O by substitution of the vinyl group on carbon 2 of heme B porphyrin ring with a hydroxyethyl farnesyl side group. This chain is Protoheme IX farnesyltransferase, found in Koribacter versatilis (strain Ellin345).